The chain runs to 338 residues: Ribosomal RNA small subunit methyltransferase H (338 aa).

Residues 46 to 48, Asp-63, Phe-90, Asp-106, and Gln-113 contribute to the S-adenosyl-L-methionine site; that span reads GGY.

This sequence belongs to the methyltransferase superfamily. RsmH family.

It is found in the cytoplasm. The enzyme catalyses cytidine(1402) in 16S rRNA + S-adenosyl-L-methionine = N(4)-methylcytidine(1402) in 16S rRNA + S-adenosyl-L-homocysteine + H(+). In terms of biological role, specifically methylates the N4 position of cytidine in position 1402 (C1402) of 16S rRNA. The chain is Ribosomal RNA small subunit methyltransferase H from Mesorhizobium japonicum (strain LMG 29417 / CECT 9101 / MAFF 303099) (Mesorhizobium loti (strain MAFF 303099)).